The primary structure comprises 92 residues: Nodulation protein F (92 aa).

Positions 4 to 88 (QLTVEIIAAI…DVVEAVRGLI (85 aa)) constitute a Carrier domain. Ser-45 carries the O-(pantetheine 4'-phosphoryl)serine modification.

4'-phosphopantetheine is transferred from CoA to a specific serine of apo-NodF.

Proposed to synthesize nod factor fatty acyl chain. Involved in trans-2,trans-4,trans-6,cis-11-octadecatetraenoic acid biosynthesis. This Rhizobium leguminosarum bv. trifolii protein is Nodulation protein F (nodF).